Consider the following 311-residue polypeptide: Pyrimidine-specific ribonucleoside hydrolase RihA (311 aa).

The active site involves histidine 240.

This sequence belongs to the IUNH family. RihA subfamily.

In terms of biological role, hydrolyzes cytidine or uridine to ribose and cytosine or uracil, respectively. This is Pyrimidine-specific ribonucleoside hydrolase RihA from Salmonella enteritidis PT4 (strain P125109).